The chain runs to 634 residues: MTVDTDKQTLGFQTEVKQLLQLMIHSLYSNKEIFLRELVSNAADAADKLRFEALVKPDLLEGSGELRIRVDFDKDARTVTIDDNGIGMSREDAVSHLGTIAKSGTADFLKHLSGDQKKDANLIGQFGVGFYSAFIVADQVDVYSRRAGLPASDGVHWSSRGEGEFEVASVDKPERGTRIVLQLKEGEESFADGWTLRNILKKYSDHIGLPIEMRKEHYGEDADKPAEPEWEVVNRASALWTRPKSEIKDEEYQEFYKHVAHDAGNPLAWSHNKVEGKLDYTSLLFVPGRAPFDLYHRDSAKGLKLYVQRVFIMDQAEQFLPLYLRFIKGVVDSADLSLNVSREILQSGPVVDSMKSALTKRALDMLEKLAKDKPDDYATFWRNFGQALKEGPAEDYANREKVAGLLRFSSTHDTTGAQSVALADYVGRMTEGQDKLYYLTGESYAQIKDSPHLEVFRKKGIEVLLLTDRIDEWLMSYLTEFDSKSFVDVARGDLDLGKLDSEEDKKAQEEVAKSKEGLASRIKAALGDDVAEVRVSHRLTDSPAILAIGQGDLGLQMRQLLEASGQAVPETKPVFEFNPAHPLIEKLDAEQDMDRFGDLSRVLFDQAALAAGDSLKDPAGYVRRLNKLLLELSA.

Residues 1 to 342 (MTVDTDKQTL…SADLSLNVSR (342 aa)) form an a; substrate-binding region. Positions 343 to 559 (EILQSGPVVD…QGDLGLQMRQ (217 aa)) are b. The segment at 560 to 634 (LLEASGQAVP…LNKLLLELSA (75 aa)) is c.

This sequence belongs to the heat shock protein 90 family. In terms of assembly, homodimer.

Its subcellular location is the cytoplasm. Its function is as follows. Molecular chaperone. Has ATPase activity. This is Chaperone protein HtpG from Xanthomonas campestris pv. campestris (strain 8004).